We begin with the raw amino-acid sequence, 514 residues long: Variant surface glycoprotein ILTAT 1.24 (514 aa).

An N-terminal signal peptide occupies residues 1 to 23 (MVYRNILQLSVLKVLLIVLIVEA). Intrachain disulfides connect cysteine 37/cysteine 162 and cysteine 143/cysteine 204. Asparagine 443 is a glycosylation site (N-linked (GlcNAc...) asparagine). The tract at residues 451–476 (GVPVTQTQTAGADTTAEKCKGKGEKD) is disordered. Residues 455–464 (TQTQTAGADT) are compositionally biased toward low complexity. A compositionally biased stretch (basic and acidic residues) spans 465-476 (TAEKCKGKGEKD). Aspartate 491 is lipidated: GPI-anchor amidated aspartate. A propeptide spans 492–514 (SSILANKQFALSVASAAFVALLF) (removed in mature form).

Its subcellular location is the cell membrane. In terms of biological role, VSG forms a coat on the surface of the parasite. The trypanosome evades the immune response of the host by expressing a series of antigenically distinct VSGs from an estimated 1000 VSG genes. In Trypanosoma brucei brucei, this protein is Variant surface glycoprotein ILTAT 1.24.